The sequence spans 1368 residues: DNA-directed RNA polymerase subunit beta (1368 aa).

It belongs to the RNA polymerase beta chain family. In terms of assembly, the RNAP catalytic core consists of 2 alpha, 1 beta, 1 beta' and 1 omega subunit. When a sigma factor is associated with the core the holoenzyme is formed, which can initiate transcription.

The enzyme catalyses RNA(n) + a ribonucleoside 5'-triphosphate = RNA(n+1) + diphosphate. Functionally, DNA-dependent RNA polymerase catalyzes the transcription of DNA into RNA using the four ribonucleoside triphosphates as substrates. The chain is DNA-directed RNA polymerase subunit beta from Cupriavidus taiwanensis (strain DSM 17343 / BCRC 17206 / CCUG 44338 / CIP 107171 / LMG 19424 / R1) (Ralstonia taiwanensis (strain LMG 19424)).